A 263-amino-acid chain; its full sequence is tRNA1(Val) (adenine(37)-N6)-methyltransferase (263 aa).

This sequence belongs to the methyltransferase superfamily. tRNA (adenine-N(6)-)-methyltransferase family.

It localises to the cytoplasm. The enzyme catalyses adenosine(37) in tRNA1(Val) + S-adenosyl-L-methionine = N(6)-methyladenosine(37) in tRNA1(Val) + S-adenosyl-L-homocysteine + H(+). Functionally, specifically methylates the adenine in position 37 of tRNA(1)(Val) (anticodon cmo5UAC). In Salmonella choleraesuis (strain SC-B67), this protein is tRNA1(Val) (adenine(37)-N6)-methyltransferase.